A 429-amino-acid chain; its full sequence is 3-phosphoshikimate 1-carboxyvinyltransferase (429 aa).

Lys11, Ser12, and Arg16 together coordinate 3-phosphoshikimate. Residue Lys11 participates in phosphoenolpyruvate binding. 2 residues coordinate phosphoenolpyruvate: Gly82 and Arg110. 3-phosphoshikimate is bound by residues Ser155, Gln157, Asp302, and Lys329. A phosphoenolpyruvate-binding site is contributed by Gln157. The active-site Proton acceptor is Asp302. Residues Arg333 and Arg385 each coordinate phosphoenolpyruvate.

It belongs to the EPSP synthase family. Monomer.

It localises to the cytoplasm. The catalysed reaction is 3-phosphoshikimate + phosphoenolpyruvate = 5-O-(1-carboxyvinyl)-3-phosphoshikimate + phosphate. It participates in metabolic intermediate biosynthesis; chorismate biosynthesis; chorismate from D-erythrose 4-phosphate and phosphoenolpyruvate: step 6/7. Its function is as follows. Catalyzes the transfer of the enolpyruvyl moiety of phosphoenolpyruvate (PEP) to the 5-hydroxyl of shikimate-3-phosphate (S3P) to produce enolpyruvyl shikimate-3-phosphate and inorganic phosphate. The chain is 3-phosphoshikimate 1-carboxyvinyltransferase from Helicobacter pylori (strain J99 / ATCC 700824) (Campylobacter pylori J99).